The following is a 399-amino-acid chain: S-adenosylmethionine synthase (399 aa).

ATP is bound at residue histidine 15. A Mg(2+)-binding site is contributed by aspartate 17. Glutamate 43 contributes to the K(+) binding site. L-methionine is bound by residues glutamate 56 and glutamine 99. The interval 99–109 is flexible loop; sequence QSADIAQGVDN. ATP contacts are provided by residues 174 to 176, 244 to 245, aspartate 253, 259 to 260, alanine 276, and lysine 280; these read DGK, RF, and RK. Aspartate 253 is an L-methionine binding site. Lysine 284 serves as a coordination point for L-methionine.

It belongs to the AdoMet synthase family. Homotetramer; dimer of dimers. Mg(2+) is required as a cofactor. It depends on K(+) as a cofactor.

Its subcellular location is the cytoplasm. It catalyses the reaction L-methionine + ATP + H2O = S-adenosyl-L-methionine + phosphate + diphosphate. It functions in the pathway amino-acid biosynthesis; S-adenosyl-L-methionine biosynthesis; S-adenosyl-L-methionine from L-methionine: step 1/1. In terms of biological role, catalyzes the formation of S-adenosylmethionine (AdoMet) from methionine and ATP. The overall synthetic reaction is composed of two sequential steps, AdoMet formation and the subsequent tripolyphosphate hydrolysis which occurs prior to release of AdoMet from the enzyme. This chain is S-adenosylmethionine synthase, found in Salinispora arenicola (strain CNS-205).